The primary structure comprises 419 residues: Tyrosine--tRNA ligase (419 aa).

Tyr-34 contacts L-tyrosine. The short motif at 39–48 (PTADSLHLGN) is the 'HIGH' region element. Tyr-169 and Gln-173 together coordinate L-tyrosine. The 'KMSKS' region signature appears at 229 to 233 (KFGKS). ATP is bound at residue Lys-232. The S4 RNA-binding domain occupies 353–419 (LTLVELLISA…GKKKNFVLTY (67 aa)).

It belongs to the class-I aminoacyl-tRNA synthetase family. TyrS type 1 subfamily. In terms of assembly, homodimer.

The protein resides in the cytoplasm. The catalysed reaction is tRNA(Tyr) + L-tyrosine + ATP = L-tyrosyl-tRNA(Tyr) + AMP + diphosphate + H(+). Functionally, catalyzes the attachment of tyrosine to tRNA(Tyr) in a two-step reaction: tyrosine is first activated by ATP to form Tyr-AMP and then transferred to the acceptor end of tRNA(Tyr). This is Tyrosine--tRNA ligase from Lactococcus lactis subsp. lactis (strain IL1403) (Streptococcus lactis).